The primary structure comprises 187 residues: Probable chorismate pyruvate-lyase (187 aa).

Residues arginine 77, leucine 115, and glutamate 174 each contribute to the substrate site.

It belongs to the UbiC family.

The protein localises to the cytoplasm. The enzyme catalyses chorismate = 4-hydroxybenzoate + pyruvate. It participates in cofactor biosynthesis; ubiquinone biosynthesis. Removes the pyruvyl group from chorismate, with concomitant aromatization of the ring, to provide 4-hydroxybenzoate (4HB) for the ubiquinone pathway. The chain is Probable chorismate pyruvate-lyase from Shewanella sp. (strain ANA-3).